Reading from the N-terminus, the 110-residue chain is UPF0122 protein Aflv_1766 (110 aa).

It belongs to the UPF0122 family.

Functionally, might take part in the signal recognition particle (SRP) pathway. This is inferred from the conservation of its genetic proximity to ftsY/ffh. May be a regulatory protein. The chain is UPF0122 protein Aflv_1766 from Anoxybacillus flavithermus (strain DSM 21510 / WK1).